The sequence spans 419 residues: L-rhamnose isomerase (419 aa).

3 residues coordinate Mn(2+): His262, Asp294, and Asp296.

The protein belongs to the rhamnose isomerase family. In terms of assembly, homotetramer. It depends on Mn(2+) as a cofactor.

The protein localises to the cytoplasm. The catalysed reaction is L-rhamnopyranose = L-rhamnulose. Its pathway is carbohydrate degradation; L-rhamnose degradation; glycerone phosphate from L-rhamnose: step 1/3. In terms of biological role, catalyzes the interconversion of L-rhamnose and L-rhamnulose. This Shigella flexneri serotype 5b (strain 8401) protein is L-rhamnose isomerase.